Reading from the N-terminus, the 245-residue chain is Putative outer membrane protein RBE_0022 (245 aa).

The first 23 residues, 1-23 (MIRMSKRLGVILFVSCISINSFA), serve as a signal peptide directing secretion.

This sequence belongs to the OmpW/AlkL family.

It localises to the cell outer membrane. This is Putative outer membrane protein RBE_0022 from Rickettsia bellii (strain RML369-C).